A 67-amino-acid polypeptide reads, in one-letter code: Beta-defensin 123 (67 aa).

Positions 1–20 (MKLLLLTLTVLLLLSQLTPG) are cleaved as a signal peptide. 3 disulfides stabilise this stretch: Cys-25-Cys-52, Cys-32-Cys-46, and Cys-36-Cys-53.

This sequence belongs to the beta-defensin family. Abundant expression in the male reproductive tract only. Expressed abundantly in testis, while expression in epididymis decreased gradually from caput to cauda.

The protein resides in the secreted. In terms of biological role, has antibacterial activity. The chain is Beta-defensin 123 (DEFB123) from Macaca mulatta (Rhesus macaque).